A 429-amino-acid polypeptide reads, in one-letter code: Glutamate dehydrogenase B (429 aa).

A disordered region spans residues methionine 1–alanine 20. Lysine 119 is an active-site residue.

This sequence belongs to the Glu/Leu/Phe/Val dehydrogenases family. As to quaternary structure, homohexamer.

The protein is Glutamate dehydrogenase B (gdhB) of Halobacterium salinarum (strain ATCC 700922 / JCM 11081 / NRC-1) (Halobacterium halobium).